Here is a 313-residue protein sequence, read N- to C-terminus: tRNA dimethylallyltransferase (313 aa).

ATP is bound at residue 11–18 (GPTAGGKT). Residue 13–18 (TAGGKT) participates in substrate binding. Interaction with substrate tRNA regions lie at residues 36-39 (DSAL), 160-164 (QRIGR), and 243-248 (RCVGYR).

This sequence belongs to the IPP transferase family. Monomer. The cofactor is Mg(2+).

It catalyses the reaction adenosine(37) in tRNA + dimethylallyl diphosphate = N(6)-dimethylallyladenosine(37) in tRNA + diphosphate. In terms of biological role, catalyzes the transfer of a dimethylallyl group onto the adenine at position 37 in tRNAs that read codons beginning with uridine, leading to the formation of N6-(dimethylallyl)adenosine (i(6)A). The protein is tRNA dimethylallyltransferase of Neisseria meningitidis serogroup C / serotype 2a (strain ATCC 700532 / DSM 15464 / FAM18).